We begin with the raw amino-acid sequence, 88 residues long: Small ribosomal subunit protein uS17 (88 aa).

It belongs to the universal ribosomal protein uS17 family. In terms of assembly, part of the 30S ribosomal subunit.

In terms of biological role, one of the primary rRNA binding proteins, it binds specifically to the 5'-end of 16S ribosomal RNA. This Leuconostoc mesenteroides subsp. mesenteroides (strain ATCC 8293 / DSM 20343 / BCRC 11652 / CCM 1803 / JCM 6124 / NCDO 523 / NBRC 100496 / NCIMB 8023 / NCTC 12954 / NRRL B-1118 / 37Y) protein is Small ribosomal subunit protein uS17.